The following is a 762-amino-acid chain: Polyribonucleotide nucleotidyltransferase (762 aa).

Mg(2+) is bound by residues Asp-531 and Asp-537. One can recognise a KH domain in the interval 597–656; the sequence is PRVTTIKVPVDKIGEVIGPKGKVINSITEETGAQISIEDDGTVFVGATDGPSAQAAIDKI. The S1 motif domain occupies 668–737; sequence GERFLGTVVK…KRGKISLVLV (70 aa).

Belongs to the polyribonucleotide nucleotidyltransferase family. The cofactor is Mg(2+).

The protein localises to the cytoplasm. The catalysed reaction is RNA(n+1) + phosphate = RNA(n) + a ribonucleoside 5'-diphosphate. Functionally, involved in mRNA degradation. Catalyzes the phosphorolysis of single-stranded polyribonucleotides processively in the 3'- to 5'-direction. This chain is Polyribonucleotide nucleotidyltransferase, found in Mycobacterium marinum (strain ATCC BAA-535 / M).